A 331-amino-acid polypeptide reads, in one-letter code: DNA-directed RNA polymerase subunit alpha (331 aa).

Positions 1–233 (MVREEIAVST…DLFLPFLHAE (233 aa)) are alpha N-terminal domain (alpha-NTD). The alpha C-terminal domain (alpha-CTD) stretch occupies residues 268-331 (ALKRVFIDQS…GILQKRFAID (64 aa)).

It belongs to the RNA polymerase alpha chain family. In terms of assembly, in plastids the minimal PEP RNA polymerase catalytic core is composed of four subunits: alpha, beta, beta', and beta''. When a (nuclear-encoded) sigma factor is associated with the core the holoenzyme is formed, which can initiate transcription.

The protein resides in the plastid. It localises to the chloroplast. It catalyses the reaction RNA(n) + a ribonucleoside 5'-triphosphate = RNA(n+1) + diphosphate. In terms of biological role, DNA-dependent RNA polymerase catalyzes the transcription of DNA into RNA using the four ribonucleoside triphosphates as substrates. This Illicium oligandrum (Star anise) protein is DNA-directed RNA polymerase subunit alpha.